A 235-amino-acid chain; its full sequence is Transmembrane emp24 domain-containing protein 9 (235 aa).

The first 37 residues, 1-37 (MAAVRGVRVVGTSPGLLLGRGMRAFLLLLCLAARGGA), serve as a signal peptide directing secretion. Topologically, residues 38 to 202 (LYFHIGETEK…RQTSESTNQR (165 aa)) are lumenal. The region spanning 47–145 (KKCFIEEIPD…MLRVHLDIQV (99 aa)) is the GOLD domain. The tract at residues 121–160 (CLHSNSTKFSLFAGGMLRVHLDIQVGEHANDYAEIAAKDK) is required for interaction with STX17. A glycan (N-linked (GlcNAc...) asparagine) is linked at N125. Positions 154-184 (EIAAKDKLSELQLRVRQLVEQVEQIQKEQNY) form a coiled coil. At K160 the chain carries N6-acetyllysine. A helical transmembrane segment spans residues 203-222 (VLWWSILQTLILVAIGVWQM). Residues 223 to 235 (RHLKSFFEAKKLV) lie on the Cytoplasmic side of the membrane. The COPII vesicle coat-binding motif lies at 228–229 (FF). The COPI vesicle coat-binding motif lies at 228–235 (FFEAKKLV).

Belongs to the EMP24/GP25L family. In terms of assembly, monomer and homodimer in endoplasmic reticulum. Predominantly monomeric and to lesser extent homodimeric in endoplasmic reticulum-Golgi intermediate compartment and cis-Golgi network. Probably oligomerizes with other members of the EMP24/GP25L family such as TMED2, TMED7 and TMED10. Interacts with TMED5. Interacts (via C-terminus) with COPG1; the interaction involves dimeric TMED9. Interacts with PTPN2 and SPAST. Interacts with STX17; the interaction is direct. In terms of processing, N-linked glycosylated containing high mannose.

It is found in the endoplasmic reticulum membrane. The protein localises to the golgi apparatus. Its subcellular location is the cis-Golgi network membrane. The protein resides in the endoplasmic reticulum-Golgi intermediate compartment membrane. It localises to the trans-Golgi network membrane. Functionally, appears to be involved in vesicular protein trafficking, mainly in the early secretory pathway. In COPI vesicle-mediated retrograde transport involved in the coatomer recruitment to membranes of the early secretory pathway. Increases coatomer-dependent activity of ARFGAP2. Thought to play a crucial role in the specific retention of p24 complexes in cis-Golgi membranes; specifically contributes to the coupled localization of TMED2 and TMED10 in the cis-Golgi network. May be involved in organization of intracellular membranes, such as of the ER-Golgi intermediate compartment and the Golgi apparatus. Involved in ER localization of PTPN2. This Rattus norvegicus (Rat) protein is Transmembrane emp24 domain-containing protein 9 (Tmed9).